Here is a 279-residue protein sequence, read N- to C-terminus: Thioredoxin domain-containing protein plp1 (279 aa).

Residues 56 to 70 (RKEDTQDYNEPELHN) show a composition bias toward basic and acidic residues. The segment at 56 to 75 (RKEDTQDYNEPELHNSNDPT) is disordered. The Thioredoxin domain maps to 137–248 (FLTVENEREV…LEFRLLKSSA (112 aa)). Residues 254–267 (EESSSNKSIYHDEL) show a composition bias toward basic and acidic residues. The segment at 254 to 279 (EESSSNKSIYHDELQNNQSDDSDFFE) is disordered. Ser272 and Ser275 each carry phosphoserine.

It belongs to the phosducin family.

The protein localises to the cytoplasm. Its subcellular location is the nucleus. Functionally, inhibits early G-protein signaling events following pheromone stimulation. May help create heterodimerizable beta-tubulin by facilitating the efficient transfer of nascent beta-tubulin polypeptides to the folding apparatus. The chain is Thioredoxin domain-containing protein plp1 (plp1) from Schizosaccharomyces pombe (strain 972 / ATCC 24843) (Fission yeast).